A 367-amino-acid polypeptide reads, in one-letter code: MSDSPVLPRAHGAAVLTAAMRSVAEDFQVDELPAFDASGEGEHLLLTVRKRGQNTAYVAKRLAQWAGIAEMGIGYAGLKDRHAVTTQRFSVHLPKRIAPDLSALDDDDMQVVEHTWHNRKLQRGALHGNRFVLTLREVVGDQAVIDARLHAIAARGIPNWFGEQRFGRDGGNVAAALAMFGHTRQPDGTLAPAPKRRLRNDQRSLLLSAARSALFNQVLTARVEQGNWDAPLDGEAWMLDGSRSVFGPEPWSEVLAERLARFDIHPSGPLWGAGELRCSADAAAIEQAALSDPQSLALRTGLEAAGLKQERRALRLRPQGLAHAWLDAQTLQLTFALPPGCYATAVLWELGEVVDAARVAPQSRSEG.

The active-site Nucleophile is Asp-80. Positions Gly-156–Leu-316 constitute a TRUD domain.

It belongs to the pseudouridine synthase TruD family.

It catalyses the reaction uridine(13) in tRNA = pseudouridine(13) in tRNA. Responsible for synthesis of pseudouridine from uracil-13 in transfer RNAs. The chain is tRNA pseudouridine synthase D from Xanthomonas campestris pv. campestris (strain 8004).